The following is a 319-amino-acid chain: Sphingomyelinase D (319 aa).

The signal sequence occupies residues 1–23 (MTPLLRTICAILCILIAVPLTFA). His-44 is an active-site residue. Mg(2+)-binding residues include Glu-64, Asp-66, and Asp-109. The SMD-tail motif lies at 312–319 (ATGADKPW).

It belongs to the sphingomyelinase D/phospholipase D family. The cofactor is Mg(2+).

It is found in the secreted. It catalyses the reaction a sphingomyelin + H2O = an N-acylsphing-4-enine 1-phosphate + choline + H(+). Functionally, catalyzes the hydrolysis of sphingomyelin. Sphingomyelinases D are produced by some spider in their venoms, but also by arthropods such as ticks, or pathogenic bacteria and fungi. They might play a role in pathogenicity through different mechanisms, such as membrane destabilization and host cell penetration, but also pulmonary inflammation and cutaneous lesions. This chain is Sphingomyelinase D, found in Ajellomyces capsulatus (strain G186AR / H82 / ATCC MYA-2454 / RMSCC 2432) (Darling's disease fungus).